The primary structure comprises 696 residues: MIKWGLFGAVKPFRSMVPLSQTRSLIISKSSLVRSKRVSTIRPQLAPVNPYSKIYGRRFFSSSHKLGVNTKEDSSTYLFGRKISTSESKMLKSLLVTIWPKNKPSFKLRVIFALSLLIASKLLNVEVPFFFKKIIDEMNVDWNDQLGTVGTVIGTLIIAYGGARFGAVLFGELRNAVFASVAQTAIKRVAHNTFVHLLNMDLNFHLSRQTGGLTRAIDRGTKGISYVLNAMVFHIIPISFEISMVCGILIYNYGLSFAAVTLATMLSYSVFTIKTTAWRTGFRRQANNADNQAATVALDSLLNYESVKYFNNEGFQASKYNTALTNYQNASVKVATSLAYLNAGQNFIFTSALTAMMYMGCNGVATGSLTVGDLVLINQLVFQLSVPLSFLGSVYRELKQSLLDMENLFQLQNHEIKIKDASNAKPLLLNSTGVPGEIKFENVTFGYHPDRPILQNASFTIPAGEKIAIVGPSGSGKSTILRLIFRFYDVESGKIFIDGQDISKVTVESLRRSIGIVPQDTPLFNDTILENIRYGRLDATDKEIHEMIDKVQLTKLIEDSPNGVNTIVGERGMMISGGEKQRLAIARLLLKRAPITLFDEATSALDTHTEQSLLRTIRKVLTKKANTHIAIAHRLRTIADADKIIVLNKGQVQEEGTHHNLLQNPNSLYSQLWNIQENLDIDEELNEYAKETEEQK.

The N-terminal 67 residues, 1 to 67 (MIKWGLFGAV…RFFSSSHKLG (67 aa)), are a transit peptide targeting the mitochondrion. Residues 68 to 109 (VNTKEDSSTYLFGRKISTSESKMLKSLLVTIWPKNKPSFKLR) are Mitochondrial matrix-facing. The helical transmembrane segment at 110–131 (VIFALSLLIASKLLNVEVPFFF) threads the bilayer. The ABC transmembrane type-1 domain maps to 110-400 (VIFALSLLIA…LGSVYRELKQ (291 aa)). Topologically, residues 132–154 (KKIIDEMNVDWNDQLGTVGTVIG) are mitochondrial intermembrane. A helical membrane pass occupies residues 155–178 (TLIIAYGGARFGAVLFGELRNAVF). At 179–227 (ASVAQTAIKRVAHNTFVHLLNMDLNFHLSRQTGGLTRAIDRGTKGISYV) the chain is on the mitochondrial matrix side. A helical membrane pass occupies residues 228–251 (LNAMVFHIIPISFEISMVCGILIY). Position 252 (Asn-252) is a topological domain, mitochondrial intermembrane. The helical transmembrane segment at 253–273 (YGLSFAAVTLATMLSYSVFTI) threads the bilayer. The Mitochondrial matrix segment spans residues 274–339 (KTTAWRTGFR…ASVKVATSLA (66 aa)). Residues 279–283 (RTGFR) and 342–345 (NAGQ) contribute to the glutathione site. The chain crosses the membrane as a helical span at residues 340–358 (YLNAGQNFIFTSALTAMMY). Residues 359-373 (MGCNGVATGSLTVGD) are Mitochondrial intermembrane-facing. A helical transmembrane segment spans residues 374–395 (LVLINQLVFQLSVPLSFLGSVY). Position 392 (Gly-392) interacts with glutathione. The Mitochondrial matrix portion of the chain corresponds to 396 to 696 (RELKQSLLDM…EYAKETEEQK (301 aa)). The ABC transporter domain occupies 438–674 (IKFENVTFGY…PNSLYSQLWN (237 aa)). ATP-binding positions include Tyr-447 and 471–482 (GPSGSGKSTILR).

It belongs to the ABC transporter superfamily. ABCB family. Heavy Metal importer (TC 3.A.1.210) subfamily. Homodimer.

Its subcellular location is the mitochondrion inner membrane. Performs an essential function in the generation of cytoplasmic iron-sulfur proteins by mediating the ATP-dependent export of Fe/S cluster precursors synthesized by NFS1 and other mitochondrial proteins. Hydrolyzes ATP. Binds glutathione and may function by transporting a glutathione-conjugated iron-sulfur compound. The sequence is that of Iron-sulfur clusters transporter ATM1, mitochondrial from Debaryomyces hansenii (strain ATCC 36239 / CBS 767 / BCRC 21394 / JCM 1990 / NBRC 0083 / IGC 2968) (Yeast).